Consider the following 260-residue polypeptide: Thiazole synthase (260 aa).

The active-site Schiff-base intermediate with DXP is Lys-100. 1-deoxy-D-xylulose 5-phosphate contacts are provided by residues Gly-161, 187-188 (AG), and 209-210 (NT).

It belongs to the ThiG family. Homotetramer. Forms heterodimers with either ThiH or ThiS.

It localises to the cytoplasm. It carries out the reaction [ThiS sulfur-carrier protein]-C-terminal-Gly-aminoethanethioate + 2-iminoacetate + 1-deoxy-D-xylulose 5-phosphate = [ThiS sulfur-carrier protein]-C-terminal Gly-Gly + 2-[(2R,5Z)-2-carboxy-4-methylthiazol-5(2H)-ylidene]ethyl phosphate + 2 H2O + H(+). It participates in cofactor biosynthesis; thiamine diphosphate biosynthesis. Its function is as follows. Catalyzes the rearrangement of 1-deoxy-D-xylulose 5-phosphate (DXP) to produce the thiazole phosphate moiety of thiamine. Sulfur is provided by the thiocarboxylate moiety of the carrier protein ThiS. In vitro, sulfur can be provided by H(2)S. In Dechloromonas aromatica (strain RCB), this protein is Thiazole synthase.